A 354-amino-acid chain; its full sequence is Ornithine transcarbamylase, mitochondrial (354 aa).

Residues 1 to 32 constitute a mitochondrion transit peptide; sequence MLFHLRTLLNNAALRNGHNFVVRNFRCGQPLQ. Lys70 bears the N6-acetyllysine; alternate mark. Position 70 is an N6-succinyllysine; alternate (Lys70). The residue at position 80 (Lys80) is an N6-succinyllysine. Lys88 is modified (N6-acetyllysine; alternate). Residue Lys88 is modified to N6-succinyllysine; alternate. Ser133 carries the phosphoserine modification. An N6-acetyllysine; alternate mark is found at Lys144, Lys221, Lys231, and Lys238. Lys144, Lys221, Lys231, and Lys238 each carry N6-succinyllysine; alternate. At Lys243 the chain carries N6-acetyllysine. Residue Asp263 is part of the active site. Residues Lys274 and Lys289 each carry the N6-succinyllysine modification. Lys292 carries the post-translational modification N6-acetyllysine; alternate. At Lys292 the chain carries N6-succinyllysine; alternate. Cys303 is an active-site residue. Lys307 is subject to N6-acetyllysine; alternate. Lys307 is modified (N6-succinyllysine; alternate).

It belongs to the aspartate/ornithine carbamoyltransferase superfamily. OTCase family. In terms of assembly, homotrimer. Post-translationally, acetylation at Lys-88 negatively regulates ornithine carbamoyltransferase activity in response to nutrient signals.

It is found in the mitochondrion matrix. It catalyses the reaction carbamoyl phosphate + L-ornithine = L-citrulline + phosphate + H(+). It participates in nitrogen metabolism; urea cycle; L-citrulline from L-ornithine and carbamoyl phosphate: step 1/1. With respect to regulation, negatively regulated by lysine acetylation. Functionally, catalyzes the second step of the urea cycle, the condensation of carbamoyl phosphate with L-ornithine to form L-citrulline. The urea cycle ensures the detoxification of ammonia by converting it to urea for excretion. This Bos taurus (Bovine) protein is Ornithine transcarbamylase, mitochondrial.